Consider the following 177-residue polypeptide: Ribosome rescue factor SmrB (177 aa).

A Smr domain is found at 92-167 (LDLHGLTRQK…GDAAILVLIE (76 aa)).

The protein belongs to the SmrB family. Associates with collided ribosomes, but not with correctly translating polysomes.

Its function is as follows. Acts as a ribosome collision sensor. Detects stalled/collided disomes (pairs of ribosomes where the leading ribosome is stalled and a second ribosome has collided with it) and endonucleolytically cleaves mRNA at the 5' boundary of the stalled ribosome. Stalled/collided disomes form a new interface (primarily via the 30S subunits) that binds SmrB. Cleaved mRNA becomes available for tmRNA ligation, leading to ribosomal subunit dissociation and rescue of stalled ribosomes. In Haemophilus ducreyi (strain 35000HP / ATCC 700724), this protein is Ribosome rescue factor SmrB.